The sequence spans 94 residues: Large ribosomal subunit protein bL25 (94 aa).

The protein belongs to the bacterial ribosomal protein bL25 family. Part of the 50S ribosomal subunit; part of the 5S rRNA/L5/L18/L25 subcomplex. Contacts the 5S rRNA. Binds to the 5S rRNA independently of L5 and L18.

Its function is as follows. This is one of the proteins that binds to the 5S RNA in the ribosome where it forms part of the central protuberance. This Enterobacter sp. (strain 638) protein is Large ribosomal subunit protein bL25.